The chain runs to 72 residues: Translation initiation factor IF-1 (72 aa).

One can recognise an S1-like domain in the interval 1-72; it reads MAKDDVIEVE…TRGRITYRYK (72 aa). Tyr60 bears the Phosphotyrosine mark.

It belongs to the IF-1 family. Component of the 30S ribosomal translation pre-initiation complex which assembles on the 30S ribosome in the order IF-2 and IF-3, IF-1 and N-formylmethionyl-tRNA(fMet); mRNA recruitment can occur at any time during PIC assembly.

Its subcellular location is the cytoplasm. One of the essential components for the initiation of protein synthesis. Stabilizes the binding of IF-2 and IF-3 on the 30S subunit to which N-formylmethionyl-tRNA(fMet) subsequently binds. Helps modulate mRNA selection, yielding the 30S pre-initiation complex (PIC). Upon addition of the 50S ribosomal subunit IF-1, IF-2 and IF-3 are released leaving the mature 70S translation initiation complex. The protein is Translation initiation factor IF-1 of Oceanobacillus iheyensis (strain DSM 14371 / CIP 107618 / JCM 11309 / KCTC 3954 / HTE831).